The primary structure comprises 353 residues: Photosystem II protein D1 (353 aa).

N-acetylthreonine is present on Thr-2. Thr-2 bears the Phosphothreonine mark. The next 3 helical transmembrane spans lie at 29-46 (YIGW…TATS), 118-133 (HFLL…EWEL), and 142-156 (WIAV…AATA). His-118 provides a ligand contact to chlorophyll a. Tyr-126 serves as a coordination point for pheophytin a. [CaMn4O5] cluster is bound by residues Asp-170 and Glu-189. The chain crosses the membrane as a helical span at residues 197 to 218 (FHMLGVAGVFGGSLFSAMHGSL). His-198 provides a ligand contact to chlorophyll a. A quinone-binding positions include His-215 and 264-265 (SF). His-215 is a binding site for Fe cation. His-272 is a binding site for Fe cation. The helical transmembrane segment at 274–288 (FLAAWPVVGIWFTAL) threads the bilayer. Residues His-332, Glu-333, Asp-342, and Ala-344 each coordinate [CaMn4O5] cluster. A propeptide spanning residues 345–353 (AIEAPATNG) is cleaved from the precursor.

This sequence belongs to the reaction center PufL/M/PsbA/D family. As to quaternary structure, PSII is composed of 1 copy each of membrane proteins PsbA, PsbB, PsbC, PsbD, PsbE, PsbF, PsbH, PsbI, PsbJ, PsbK, PsbL, PsbM, PsbT, PsbX, PsbY, PsbZ, Psb30/Ycf12, at least 3 peripheral proteins of the oxygen-evolving complex and a large number of cofactors. It forms dimeric complexes. The D1/D2 heterodimer binds P680, chlorophylls that are the primary electron donor of PSII, and subsequent electron acceptors. It shares a non-heme iron and each subunit binds pheophytin, quinone, additional chlorophylls, carotenoids and lipids. D1 provides most of the ligands for the Mn4-Ca-O5 cluster of the oxygen-evolving complex (OEC). There is also a Cl(-1) ion associated with D1 and D2, which is required for oxygen evolution. The PSII complex binds additional chlorophylls, carotenoids and specific lipids. serves as cofactor. Tyr-161 forms a radical intermediate that is referred to as redox-active TyrZ, YZ or Y-Z. In terms of processing, C-terminally processed by CTPA; processing is essential to allow assembly of the oxygen-evolving complex and thus photosynthetic growth.

It localises to the plastid membrane. The enzyme catalyses 2 a plastoquinone + 4 hnu + 2 H2O = 2 a plastoquinol + O2. Its function is as follows. Photosystem II (PSII) is a light-driven water:plastoquinone oxidoreductase that uses light energy to abstract electrons from H(2)O, generating O(2) and a proton gradient subsequently used for ATP formation. It consists of a core antenna complex that captures photons, and an electron transfer chain that converts photonic excitation into a charge separation. The D1/D2 (PsbA/PsbD) reaction center heterodimer binds P680, the primary electron donor of PSII as well as several subsequent electron acceptors. The sequence is that of Photosystem II protein D1 from Cuscuta exaltata (Tall dodder).